A 211-amino-acid chain; its full sequence is GLLGAPAVATYAAAPAVAYSAAPAVSTAYINQAAPVLAHAGPVAVAHAAPYAVHAPAVGASHQAIVRSLGGNQAVSHYSKAVDSAFSSVRKFDTRITNDALLHAPVAVAHAAPVVSTYAAHAPVVSSYAHAPLVSSYAAHAPLVSSYAAHAPLVSSYAAHAPVLSTAYAAHAPVVSSYAAPVVARTAAVGYSPAAVVSHTSFTGLGASYAW.

5 consecutive repeat copies span residues 13–16 (AAPA), 21–24 (AAPA), 33–36 (AAPV), 111–114 (AAPV), and 179–182 (AAPV).

Functionally, component of the cuticle of the pupa of Tenebrio molitor. This Tenebrio molitor (Yellow mealworm beetle) protein is Pupal cuticle protein G1A.